A 77-amino-acid polypeptide reads, in one-letter code: Large ribosomal subunit protein bL28 (77 aa).

It belongs to the bacterial ribosomal protein bL28 family.

The chain is Large ribosomal subunit protein bL28 from Paracidovorax citrulli (strain AAC00-1) (Acidovorax citrulli).